Consider the following 253-residue polypeptide: Triosephosphate isomerase (253 aa).

Residue 9-11 (NWK) coordinates substrate. The active-site Electrophile is His95. Glu167 functions as the Proton acceptor in the catalytic mechanism. Substrate contacts are provided by residues Gly173, Ser213, and 234-235 (GG). Residue Ser213 is modified to Phosphoserine.

The protein belongs to the triosephosphate isomerase family. As to quaternary structure, homodimer.

The protein resides in the cytoplasm. It carries out the reaction D-glyceraldehyde 3-phosphate = dihydroxyacetone phosphate. It participates in carbohydrate biosynthesis; gluconeogenesis. Its pathway is carbohydrate degradation; glycolysis; D-glyceraldehyde 3-phosphate from glycerone phosphate: step 1/1. Functionally, involved in the gluconeogenesis. Catalyzes stereospecifically the conversion of dihydroxyacetone phosphate (DHAP) to D-glyceraldehyde-3-phosphate (G3P). The polypeptide is Triosephosphate isomerase (Bacillus subtilis (strain 168)).